The primary structure comprises 164 residues: Protein-export protein SecB (164 aa).

This sequence belongs to the SecB family. As to quaternary structure, homotetramer, a dimer of dimers. One homotetramer interacts with 1 SecA dimer.

It is found in the cytoplasm. In terms of biological role, one of the proteins required for the normal export of preproteins out of the cell cytoplasm. It is a molecular chaperone that binds to a subset of precursor proteins, maintaining them in a translocation-competent state. It also specifically binds to its receptor SecA. The polypeptide is Protein-export protein SecB (Pseudomonas syringae pv. tomato (strain ATCC BAA-871 / DC3000)).